The primary structure comprises 299 residues: Taste receptor type 2 member 4 (299 aa).

The Extracellular segment spans residues 1-9; it reads MLRLFYFSA. Residues 10-30 traverse the membrane as a helical segment; that stretch reads IIASVILNFVGIIMNLFITVV. Residues 31–46 are Cytoplasmic-facing; that stretch reads NCKTWVKSHRISSSDR. A helical transmembrane segment spans residues 47–67; the sequence is ILFSLGITRFLMLGLFLVNTI. Residues 68–81 are Extracellular-facing; that stretch reads YFVSSNTERSVYLS. The helical transmembrane segment at 82-102 threads the bilayer; the sequence is AFFVLCFMFLDSSSVWFVTLL. The Cytoplasmic portion of the chain corresponds to 103–131; sequence NILYCVKITNFQHSVFLLLKRNISPKIPR. Residues 132-152 traverse the membrane as a helical segment; that stretch reads LLLACVLISAFTTCLYITLSQ. The Extracellular segment spans residues 153–172; the sequence is ASPFPELVTTRNNTSFNISE. Residues Asn-164, Asn-165, and Asn-169 are each glycosylated (N-linked (GlcNAc...) asparagine). The chain crosses the membrane as a helical span at residues 173–193; it reads GILSLVVSLVLSSSLQFIINV. Over 194-230 the chain is Cytoplasmic; that stretch reads TSASLLIHSLRRHIQKMQKNATGFWNPQTEAHVGAMK. The helical transmembrane segment at 231-251 threads the bilayer; the sequence is LMVYFLILYIPYSVATLVQYL. Residues 252-262 lie on the Extracellular side of the membrane; the sequence is PFYAGMDMGTK. A helical membrane pass occupies residues 263-283; sequence SICLIFATLYSPGHSVLIIIT. The Cytoplasmic portion of the chain corresponds to 284-299; the sequence is HPKLKTTAKKILCFKK.

Belongs to the G-protein coupled receptor T2R family. As to expression, expressed in subsets of taste receptor cells of the tongue and palate epithelium and exclusively in gustducin-positive cells. Expressed on airway ciliated epithelium.

The protein resides in the membrane. It localises to the cell projection. Its subcellular location is the cilium membrane. Its function is as follows. Gustducin-coupled receptor for denatonium and N(6)-propyl-2-thiouracil implicated in the perception of bitter compounds in the oral cavity and the gastrointestinal tract. Signals through PLCB2 and the calcium-regulated cation channel TRPM5. In airway epithelial cells, binding of denatonium increases the intracellular calcium ion concentration and stimulates ciliary beat frequency. The sequence is that of Taste receptor type 2 member 4 (TAS2R4) from Homo sapiens (Human).